A 242-amino-acid chain; its full sequence is ATP synthase subunit a (242 aa).

The next 6 helical transmembrane spans lie at 29 to 49 (SSIY…LAFY), 84 to 104 (FIPL…LGMT), 114 to 134 (IIVT…VGFV), 140 to 160 (FLTL…MIVI), 189 to 209 (VIAG…IPLM), and 210 to 230 (VILI…FTIL).

The protein belongs to the ATPase A chain family. As to quaternary structure, F-type ATPases have 2 components, CF(1) - the catalytic core - and CF(0) - the membrane proton channel. CF(1) has five subunits: alpha(3), beta(3), gamma(1), delta(1), epsilon(1). CF(0) has three main subunits: a(1), b(2) and c(9-12). The alpha and beta chains form an alternating ring which encloses part of the gamma chain. CF(1) is attached to CF(0) by a central stalk formed by the gamma and epsilon chains, while a peripheral stalk is formed by the delta and b chains.

It is found in the cell inner membrane. Key component of the proton channel; it plays a direct role in the translocation of protons across the membrane. This is ATP synthase subunit a from Rickettsia felis (strain ATCC VR-1525 / URRWXCal2) (Rickettsia azadi).